A 472-amino-acid polypeptide reads, in one-letter code: ATP synthase subunit beta (472 aa).

149-156 (GGAGVGKT) serves as a coordination point for ATP.

This sequence belongs to the ATPase alpha/beta chains family. F-type ATPases have 2 components, CF(1) - the catalytic core - and CF(0) - the membrane proton channel. CF(1) has five subunits: alpha(3), beta(3), gamma(1), delta(1), epsilon(1). CF(0) has three main subunits: a(1), b(2) and c(9-12). The alpha and beta chains form an alternating ring which encloses part of the gamma chain. CF(1) is attached to CF(0) by a central stalk formed by the gamma and epsilon chains, while a peripheral stalk is formed by the delta and b chains.

The protein resides in the cell inner membrane. It catalyses the reaction ATP + H2O + 4 H(+)(in) = ADP + phosphate + 5 H(+)(out). Functionally, produces ATP from ADP in the presence of a proton gradient across the membrane. The catalytic sites are hosted primarily by the beta subunits. This chain is ATP synthase subunit beta, found in Pelagibacter ubique (strain HTCC1062).